The chain runs to 383 residues: Probable 2-succinylbenzoate--CoA ligase (383 aa).

This sequence belongs to the ATP-dependent AMP-binding enzyme family. MenE subfamily.

The catalysed reaction is 2-succinylbenzoate + ATP + CoA = 2-succinylbenzoyl-CoA + AMP + diphosphate. The protein operates within quinol/quinone metabolism; 1,4-dihydroxy-2-naphthoate biosynthesis; 1,4-dihydroxy-2-naphthoate from chorismate: step 5/7. Its pathway is quinol/quinone metabolism; menaquinone biosynthesis. Its function is as follows. Converts 2-succinylbenzoate (OSB) to 2-succinylbenzoyl-CoA (OSB-CoA). May be involved in the biosynthesis of menaquinone. In Mycobacterium tuberculosis (strain CDC 1551 / Oshkosh), this protein is Probable 2-succinylbenzoate--CoA ligase (menE).